The sequence spans 241 residues: GTP cyclohydrolase 1 (241 aa).

Residues 1–11 (MEKPRGVRCTN) constitute a propeptide that is removed on maturation. The interval 1 to 58 (MEKPRGVRCTNGFPERELPRPGASRPAEKSRPPEAKGAQPADAWKAGRPRSEEDNELN) is disordered. Ser-51 and Ser-72 each carry phosphoserine. The Zn(2+) site is built by Cys-132, His-135, and Cys-203.

Belongs to the GTP cyclohydrolase I family. As to quaternary structure, toroid-shaped homodecamer, composed of two pentamers of five dimers. Interacts with AHSA1 and GCHFR/GFRP. Post-translationally, phosphorylated.

Its subcellular location is the cytoplasm. The protein localises to the nucleus. The enzyme catalyses GTP + H2O = 7,8-dihydroneopterin 3'-triphosphate + formate + H(+). It functions in the pathway cofactor biosynthesis; 7,8-dihydroneopterin triphosphate biosynthesis; 7,8-dihydroneopterin triphosphate from GTP: step 1/1. GTP shows a positive allosteric effect, and tetrahydrobiopterin inhibits the enzyme activity. Zinc is required for catalytic activity. Inhibited by Mg(2+). In terms of biological role, may positively regulate nitric oxide synthesis in endothelial cells. May be involved in dopamine synthesis. May modify pain sensitivity and persistence. The polypeptide is GTP cyclohydrolase 1 (Gch1) (Rattus norvegicus (Rat)).